The primary structure comprises 446 residues: Maltoporin (446 aa).

The signal sequence occupies residues 1–25; sequence MMITLRKLPLAVAVAAGVMSAQAMA.

The protein belongs to the porin LamB (TC 1.B.3) family. As to quaternary structure, homotrimer formed of three 18-stranded antiparallel beta-barrels, containing three independent channels.

It is found in the cell outer membrane. It carries out the reaction beta-maltose(in) = beta-maltose(out). Functionally, involved in the transport of maltose and maltodextrins. The chain is Maltoporin from Escherichia coli O6:K15:H31 (strain 536 / UPEC).